The primary structure comprises 163 residues: General stress protein 16O (163 aa).

Positions Gln19 to Glu30 are enriched in basic and acidic residues. 2 disordered regions span residues Gln19–Thr55 and Ala115–Lys163. A dksA C4-type; degenerate zinc finger spans residues Cys89–Thr123. The segment covering Ser127–Asp146 has biased composition (basic and acidic residues).

The sequence is that of General stress protein 16O (yocK) from Bacillus subtilis (strain 168).